The primary structure comprises 96 residues: UPF0235 protein YggU (96 aa).

This sequence belongs to the UPF0235 family.

This chain is UPF0235 protein YggU, found in Salmonella arizonae (strain ATCC BAA-731 / CDC346-86 / RSK2980).